We begin with the raw amino-acid sequence, 143 residues long: Small ribosomal subunit protein uS11c (143 aa).

This sequence belongs to the universal ribosomal protein uS11 family. As to quaternary structure, part of the 30S ribosomal subunit.

Its subcellular location is the plastid. It is found in the chloroplast. This chain is Small ribosomal subunit protein uS11c, found in Oryza nivara (Indian wild rice).